A 199-amino-acid chain; its full sequence is uncharacterized protein (199 aa).

Residues 1-41 form a disordered region; that stretch reads MKFKRDENQNSTHHRGNKNNTNNDDDDKEEEEEIINDTTMP. Acidic residues predominate over residues 23–35; it reads NDDDDKEEEEEII. The next 3 helical transmembrane spans lie at 73 to 93, 96 to 116, and 166 to 186; these read LILD…FAFW, ISTY…VSFL, and IAIA…SPYL.

Its subcellular location is the membrane. This is an uncharacterized protein from Dictyostelium discoideum (Social amoeba).